A 355-amino-acid polypeptide reads, in one-letter code: Peptide chain release factor 1 (355 aa).

N5-methylglutamine is present on Gln-233.

This sequence belongs to the prokaryotic/mitochondrial release factor family. In terms of processing, methylated by PrmC. Methylation increases the termination efficiency of RF1.

The protein resides in the cytoplasm. Its function is as follows. Peptide chain release factor 1 directs the termination of translation in response to the peptide chain termination codons UAG and UAA. This Rickettsia typhi (strain ATCC VR-144 / Wilmington) protein is Peptide chain release factor 1.